Reading from the N-terminus, the 63-residue chain is Large ribosomal subunit protein bL28 (63 aa).

The tract at residues Met-1–Ala-21 is disordered.

It belongs to the bacterial ribosomal protein bL28 family.

The polypeptide is Large ribosomal subunit protein bL28 (Mycoplasmopsis pulmonis (strain UAB CTIP) (Mycoplasma pulmonis)).